The sequence spans 258 residues: Hydroxyacylglutathione hydrolase (258 aa).

7 residues coordinate Zn(2+): His-52, His-54, Asp-56, His-57, His-109, Asp-126, and His-164.

Belongs to the metallo-beta-lactamase superfamily. Glyoxalase II family. Monomer. It depends on Zn(2+) as a cofactor.

The catalysed reaction is an S-(2-hydroxyacyl)glutathione + H2O = a 2-hydroxy carboxylate + glutathione + H(+). The protein operates within secondary metabolite metabolism; methylglyoxal degradation; (R)-lactate from methylglyoxal: step 2/2. Functionally, thiolesterase that catalyzes the hydrolysis of S-D-lactoyl-glutathione to form glutathione and D-lactic acid. This Xylella fastidiosa (strain M23) protein is Hydroxyacylglutathione hydrolase.